Here is a 368-residue protein sequence, read N- to C-terminus: D-alanine--D-alanine ligase (368 aa).

Residues 151–358 (KKLLAAEGLP…YGTLVSTLVD (208 aa)) form the ATP-grasp domain. 179-234 (RSRLHLPVFVKPARGGSSIGITRVAEWAALDDAIAHARRHDPKVIVESGIAGREVE) serves as a coordination point for ATP. Residues D313, E325, and N327 each contribute to the Mg(2+) site.

Belongs to the D-alanine--D-alanine ligase family. Mg(2+) is required as a cofactor. The cofactor is Mn(2+).

It is found in the cytoplasm. The catalysed reaction is 2 D-alanine + ATP = D-alanyl-D-alanine + ADP + phosphate + H(+). It participates in cell wall biogenesis; peptidoglycan biosynthesis. Cell wall formation. The polypeptide is D-alanine--D-alanine ligase (Rhodococcus opacus (strain B4)).